Here is a 396-residue protein sequence, read N- to C-terminus: 1-deoxy-D-xylulose 5-phosphate reductoisomerase (396 aa).

NADPH-binding residues include T10, G11, S12, I13, and N123. Residue K124 coordinates 1-deoxy-D-xylulose 5-phosphate. Position 125 (E125) interacts with NADPH. D149 contributes to the Mn(2+) binding site. The 1-deoxy-D-xylulose 5-phosphate site is built by S150, E151, S185, and H208. E151 is a binding site for Mn(2+). Position 214 (G214) interacts with NADPH. 4 residues coordinate 1-deoxy-D-xylulose 5-phosphate: S221, N226, K227, and E230. A Mn(2+)-binding site is contributed by E230.

This sequence belongs to the DXR family. Requires Mg(2+) as cofactor. Mn(2+) is required as a cofactor.

It carries out the reaction 2-C-methyl-D-erythritol 4-phosphate + NADP(+) = 1-deoxy-D-xylulose 5-phosphate + NADPH + H(+). The protein operates within isoprenoid biosynthesis; isopentenyl diphosphate biosynthesis via DXP pathway; isopentenyl diphosphate from 1-deoxy-D-xylulose 5-phosphate: step 1/6. Catalyzes the NADPH-dependent rearrangement and reduction of 1-deoxy-D-xylulose-5-phosphate (DXP) to 2-C-methyl-D-erythritol 4-phosphate (MEP). The polypeptide is 1-deoxy-D-xylulose 5-phosphate reductoisomerase (Shewanella sp. (strain MR-7)).